Reading from the N-terminus, the 597-residue chain is Elongation factor 4 (597 aa).

The region spanning 2–184 is the tr-type G domain; sequence DHIRNFSIIA…ALIAKVPPPK (183 aa). GTP contacts are provided by residues 14-19 and 131-134; these read DHGKST and NKID.

The protein belongs to the TRAFAC class translation factor GTPase superfamily. Classic translation factor GTPase family. LepA subfamily.

It localises to the cell inner membrane. It carries out the reaction GTP + H2O = GDP + phosphate + H(+). In terms of biological role, required for accurate and efficient protein synthesis under certain stress conditions. May act as a fidelity factor of the translation reaction, by catalyzing a one-codon backward translocation of tRNAs on improperly translocated ribosomes. Back-translocation proceeds from a post-translocation (POST) complex to a pre-translocation (PRE) complex, thus giving elongation factor G a second chance to translocate the tRNAs correctly. Binds to ribosomes in a GTP-dependent manner. This Cupriavidus taiwanensis (strain DSM 17343 / BCRC 17206 / CCUG 44338 / CIP 107171 / LMG 19424 / R1) (Ralstonia taiwanensis (strain LMG 19424)) protein is Elongation factor 4.